Consider the following 106-residue polypeptide: Large ribosomal subunit protein uL24 (106 aa).

Belongs to the universal ribosomal protein uL24 family. In terms of assembly, part of the 50S ribosomal subunit.

Its function is as follows. One of two assembly initiator proteins, it binds directly to the 5'-end of the 23S rRNA, where it nucleates assembly of the 50S subunit. In terms of biological role, one of the proteins that surrounds the polypeptide exit tunnel on the outside of the subunit. The polypeptide is Large ribosomal subunit protein uL24 (Polaromonas sp. (strain JS666 / ATCC BAA-500)).